The sequence spans 107 residues: DNA polymerase delta subunit 4 (107 aa).

The PCNA-interaction protein motif (PIP box) signature appears at 1 to 16 (MGRKRLITDSYPVVKR). Residues 1–44 (MGRKRLITDSYPVVKRREGPAGHSKGELAPELGEEPQPRDEEEA) form a disordered region. Basic and acidic residues predominate over residues 15–28 (KRREGPAGHSKGEL).

Belongs to the DNA polymerase delta subunit 4 family. Component of the tetrameric DNA polymerase delta complex (Pol-delta4), which consists of POLD1/p125, POLD2/p50, POLD3/p66/p68 and POLD4/p12, with POLD1 bearing DNA polymerase and 3' to 5' proofreading exonuclease activities. Within this complex, directly interacts with POLD1 and POLD2. Directly interacts with PCNA, as do POLD1 and POLD3; this interaction stimulates Pol-delta4 polymerase activity. As POLD1 and POLD2, directly interacts with WRNIP1; this interaction stimulates DNA polymerase delta-mediated DNA synthesis, independently of the presence of PCNA. This stimulation may be due predominantly to an increase of initiation frequency and also to increased processivity. Upon genotoxic stress induced by DNA damaging agents or by replication stress, POLD4 is proteolytically degraded and Pol-delta4 is converted into a trimeric form of the complex (Pol-delta3) which has an increased proofreading activity. The DNA polymerase delta complex interacts with POLDIP2; this interaction is probably mediated through direct binding to POLD2. Post-translationally, ubiquitinated; undergoes 'Lys-48'-linked ubiquitination in response to UV irradiation, leading to proteasomal degradation. This modification is partly mediated by RNF8 and by the DCX(DTL) E3 ubiquitin ligase complex (also called CRL4(CDT2)). Efficient degradation requires the presence of PCNA and is required for the inhibition of fork progression after DNA damage.

The protein localises to the nucleus. Its function is as follows. As a component of the tetrameric DNA polymerase delta complex (Pol-delta4), plays a role in high fidelity genome replication and repair. Within this complex, increases the rate of DNA synthesis and decreases fidelity by regulating POLD1 polymerase and proofreading 3' to 5' exonuclease activity. Pol-delta4 participates in Okazaki fragment processing, through both the short flap pathway, as well as a nick translation system. Under conditions of DNA replication stress, required for the repair of broken replication forks through break-induced replication (BIR), a mechanism that may induce segmental genomic duplications of up to 200 kb. Involved in Pol-delta4 translesion synthesis (TLS) of templates carrying O6-methylguanine or abasic sites. Its degradation in response to DNA damage is required for the inhibition of fork progression and cell survival. This is DNA polymerase delta subunit 4 (POLD4) from Homo sapiens (Human).